The following is a 660-amino-acid chain: Bifunctional polymyxin resistance protein ArnA (660 aa).

Residues 1 to 304 (MKAVIFAYHD…ALGLVKGALL (304 aa)) are formyltransferase ArnAFT. H104 serves as the catalytic Proton donor; for formyltransferase activity. (6R)-10-formyltetrahydrofolate-binding positions include R114 and 136 to 140 (TARAD). Residues 314 to 660 (RRTRVLILGV…QTVDLPDAAQ (347 aa)) are dehydrogenase ArnADH. Residues D347 and 368 to 369 (DI) each bind NAD(+). Residues A393, Y398, and 432-433 (TS) contribute to the UDP-alpha-D-glucuronate site. E434 (proton acceptor; for decarboxylase activity) is an active-site residue. UDP-alpha-D-glucuronate contacts are provided by residues R460, N492, 526-535 (KLVDGGAQKR), and Y613. Residue R619 is the Proton donor; for decarboxylase activity of the active site.

In the N-terminal section; belongs to the Fmt family. UDP-L-Ara4N formyltransferase subfamily. This sequence in the C-terminal section; belongs to the NAD(P)-dependent epimerase/dehydratase family. UDP-glucuronic acid decarboxylase subfamily. Homohexamer, formed by a dimer of trimers.

It carries out the reaction UDP-alpha-D-glucuronate + NAD(+) = UDP-beta-L-threo-pentopyranos-4-ulose + CO2 + NADH. The enzyme catalyses UDP-4-amino-4-deoxy-beta-L-arabinose + (6R)-10-formyltetrahydrofolate = UDP-4-deoxy-4-formamido-beta-L-arabinose + (6S)-5,6,7,8-tetrahydrofolate + H(+). It participates in nucleotide-sugar biosynthesis; UDP-4-deoxy-4-formamido-beta-L-arabinose biosynthesis; UDP-4-deoxy-4-formamido-beta-L-arabinose from UDP-alpha-D-glucuronate: step 1/3. The protein operates within nucleotide-sugar biosynthesis; UDP-4-deoxy-4-formamido-beta-L-arabinose biosynthesis; UDP-4-deoxy-4-formamido-beta-L-arabinose from UDP-alpha-D-glucuronate: step 3/3. Its pathway is bacterial outer membrane biogenesis; lipopolysaccharide biosynthesis. In terms of biological role, bifunctional enzyme that catalyzes the oxidative decarboxylation of UDP-glucuronic acid (UDP-GlcUA) to UDP-4-keto-arabinose (UDP-Ara4O) and the addition of a formyl group to UDP-4-amino-4-deoxy-L-arabinose (UDP-L-Ara4N) to form UDP-L-4-formamido-arabinose (UDP-L-Ara4FN). The modified arabinose is attached to lipid A and is required for resistance to polymyxin and cationic antimicrobial peptides. The protein is Bifunctional polymyxin resistance protein ArnA of Sodalis glossinidius (strain morsitans).